The sequence spans 275 residues: MSDLYAVIGNPVAHSKSPLIHAGFARQSGQDVRYEAILAPLDGFVETVAAFRQRGGKGANVTVPFKLEAHTLSSCLTERAKAAGAVNTLVFGADDILGDNTDGAGLVRDVAVNLGYALDDRRVLLMGAGGAARGVIRPLLEHEPAALVIANRTPQKADDLQRLFASSGNVLSAAYEDLRGQEFDLVINATSASLQGDLPPLPKGIFAGASLAYDMMYGKGLTSFLQFAQQQGAARLADGIGMLVEQAAESFFLWRGIRPETEPVIGMLRSSLGSP.

Shikimate-binding positions include 15-17 and threonine 62; that span reads SKS. Lysine 66 acts as the Proton acceptor in catalysis. Glutamate 78 lines the NADP(+) pocket. Residues asparagine 87 and aspartate 102 each contribute to the shikimate site. NADP(+) is bound by residues 127-131, 151-156, and methionine 215; these read GAGGA and NRTPQK. Tyrosine 217 contributes to the shikimate binding site. Glycine 239 serves as a coordination point for NADP(+).

It belongs to the shikimate dehydrogenase family. In terms of assembly, homodimer.

The catalysed reaction is shikimate + NADP(+) = 3-dehydroshikimate + NADPH + H(+). Its pathway is metabolic intermediate biosynthesis; chorismate biosynthesis; chorismate from D-erythrose 4-phosphate and phosphoenolpyruvate: step 4/7. Functionally, involved in the biosynthesis of the chorismate, which leads to the biosynthesis of aromatic amino acids. Catalyzes the reversible NADPH linked reduction of 3-dehydroshikimate (DHSA) to yield shikimate (SA). The chain is Shikimate dehydrogenase (NADP(+)) from Nitrosospira multiformis (strain ATCC 25196 / NCIMB 11849 / C 71).